Consider the following 87-residue polypeptide: uncharacterized protein (87 aa).

This is an uncharacterized protein from Escherichia coli (Bacteriophage T4).